A 174-amino-acid polypeptide reads, in one-letter code: Adenine phosphoribosyltransferase (174 aa).

It belongs to the purine/pyrimidine phosphoribosyltransferase family. As to quaternary structure, homodimer.

The protein localises to the cytoplasm. It carries out the reaction AMP + diphosphate = 5-phospho-alpha-D-ribose 1-diphosphate + adenine. It participates in purine metabolism; AMP biosynthesis via salvage pathway; AMP from adenine: step 1/1. In terms of biological role, catalyzes a salvage reaction resulting in the formation of AMP, that is energically less costly than de novo synthesis. The chain is Adenine phosphoribosyltransferase from Phocaeicola vulgatus (strain ATCC 8482 / DSM 1447 / JCM 5826 / CCUG 4940 / NBRC 14291 / NCTC 11154) (Bacteroides vulgatus).